The primary structure comprises 342 residues: Uroporphyrinogen decarboxylase (342 aa).

Residues 24 to 28, Asp74, Tyr149, Ser204, and His319 contribute to the substrate site; that span reads RQAGR.

The protein belongs to the uroporphyrinogen decarboxylase family. Homodimer.

Its subcellular location is the cytoplasm. It carries out the reaction uroporphyrinogen III + 4 H(+) = coproporphyrinogen III + 4 CO2. Its pathway is porphyrin-containing compound metabolism; protoporphyrin-IX biosynthesis; coproporphyrinogen-III from 5-aminolevulinate: step 4/4. Catalyzes the decarboxylation of four acetate groups of uroporphyrinogen-III to yield coproporphyrinogen-III. This is Uroporphyrinogen decarboxylase from Chelativorans sp. (strain BNC1).